We begin with the raw amino-acid sequence, 39 residues long: Mu-theraphotoxin-Ae1a (39 aa).

Disulfide bonds link Cys-7–Cys-21, Cys-14–Cys-26, and Cys-20–Cys-33. Residue Phe-39 is modified to Phenylalanine amide.

The protein belongs to the neurotoxin 10 (Hwtx-1) family. 47 subfamily. As to expression, expressed by the venom gland.

It localises to the secreted. Its function is as follows. Insecticidal toxin that acts, at least partially, by inhibiting insect voltage-gated sodium (NaV) channels of several insect species. The toxin binds to the voltage sensor in NaV channel domain II and inhibits channel opening by shifting the threshold for channel activation to more positive voltages. The toxin binding is sensitive to residues in the S1-S2 loop of the domain II voltage sensor. In vivo, the recombinant toxin causes paralysis and/or death to two dipteran species (Lucilia cuprina and Drosophila melanogaster). In contrast, the toxin does not show paralytic or lethal effect on the cotton bollworm Helicoverpa armigera and the triatomine bug Rhodinius prolixus. This chain is Mu-theraphotoxin-Ae1a, found in Augacephalus ezendami (Mozambique baboon spider).